The sequence spans 344 residues: tRNA N6-adenosine threonylcarbamoyltransferase (344 aa).

Positions 114 and 118 each coordinate Fe cation. Substrate is bound by residues 136 to 140, Asp-170, Gly-183, Asp-187, and Asn-278; that span reads LVSGG. Asp-306 serves as a coordination point for Fe cation.

Belongs to the KAE1 / TsaD family. Requires Fe(2+) as cofactor.

It is found in the cytoplasm. It catalyses the reaction L-threonylcarbamoyladenylate + adenosine(37) in tRNA = N(6)-L-threonylcarbamoyladenosine(37) in tRNA + AMP + H(+). Functionally, required for the formation of a threonylcarbamoyl group on adenosine at position 37 (t(6)A37) in tRNAs that read codons beginning with adenine. Is involved in the transfer of the threonylcarbamoyl moiety of threonylcarbamoyl-AMP (TC-AMP) to the N6 group of A37, together with TsaE and TsaB. TsaD likely plays a direct catalytic role in this reaction. In Mycobacteroides abscessus (strain ATCC 19977 / DSM 44196 / CCUG 20993 / CIP 104536 / JCM 13569 / NCTC 13031 / TMC 1543 / L948) (Mycobacterium abscessus), this protein is tRNA N6-adenosine threonylcarbamoyltransferase.